We begin with the raw amino-acid sequence, 101 residues long: Small ribosomal subunit protein bS6 (101 aa).

The protein belongs to the bacterial ribosomal protein bS6 family. Part of the 30S ribosomal subunit. Forms a tight heterodimer with protein bS18.

In terms of biological role, located on the outer edge of the platform on the body of the 30S subunit. The polypeptide is Small ribosomal subunit protein bS6 (rpsF) (Thermus thermophilus (strain ATCC BAA-163 / DSM 7039 / HB27)).